A 630-amino-acid polypeptide reads, in one-letter code: UvrABC system protein C (630 aa).

A disordered region spans residues 1–96 (MGAEGLQGEG…GEAHRRGGTG (96 aa)). Low complexity predominate over residues 9 to 28 (EGEVPPQGAGVPGQVQVGVH). Residues 52 to 125 (DPRGLPVEAG…IKAHRPLYNV (74 aa)) enclose the GIY-YIG domain. Basic and acidic residues predominate over residues 75 to 91 (RPGEKLLPRRGQGEAHR). One can recognise a UVR domain in the interval 234-269 (DGLLQELEAKMREAARRLEFERAAEIRDQMEALRAF).

This sequence belongs to the UvrC family. In terms of assembly, interacts with UvrB in an incision complex.

The protein localises to the cytoplasm. In terms of biological role, the UvrABC repair system catalyzes the recognition and processing of DNA lesions. UvrC both incises the 5' and 3' sides of the lesion. The N-terminal half is responsible for the 3' incision and the C-terminal half is responsible for the 5' incision. This is UvrABC system protein C from Thermus thermophilus (strain ATCC BAA-163 / DSM 7039 / HB27).